Consider the following 108-residue polypeptide: UPF0145 protein AF_0869 (108 aa).

The protein belongs to the UPF0145 family.

This Archaeoglobus fulgidus (strain ATCC 49558 / DSM 4304 / JCM 9628 / NBRC 100126 / VC-16) protein is UPF0145 protein AF_0869.